Here is a 274-residue protein sequence, read N- to C-terminus: MKIHKLCFLALLLAHTTSAVNLNLNLKTSELVFLGDAELGPASDGVSRSGALSMTRDENPFSHGQSLWSTPVPFKPSSNSSSPYPFETSFTFSISTRIKPAPGHGLAFVVVPSIESDGPGPAGYLGIFNKTNNGNPKNHIFAVEFDVFQDKGFGDINDNHVGININSVTSVVAEKAGYWVQTGIGKMKHWSFKEFKLSNGERYKAWIEYRNSKVTVTLAPETVKKPKKPLIVAHLDLSKVFLQNMYPGFSGAMGRGVERHDIWSWTFQNSAKRI.

The first 19 residues, M1 to A19, serve as a signal peptide directing secretion. Residues T28 to Q268 are legume-lectin like. The disordered stretch occupies residues S62–S81. N-linked (GlcNAc...) asparagine glycosylation occurs at N129. S238 carries the phosphoserine modification.

Belongs to the leguminous lectin family. As to expression, expressed in seedlings and leaves of adult plants.

The protein resides in the secreted. The protein localises to the extracellular space. It localises to the apoplast. It is found in the cell membrane. Plays a positive role in the effector-triggered immunity (ETI) response. Involved in salicylic acid (SA)-mediated processes occurring in ETI response, but is not involved in the autophagy process. Promotes systemic rather than local immunity. Essential for systemic acquired resistance (SAR), but not necessary for immune signaling downstream of SA. May act in parallel with SA. The chain is Lectin-like protein from Arabidopsis thaliana (Mouse-ear cress).